The chain runs to 311 residues: Solute carrier family 25 member 36 (311 aa).

Solcar repeat units follow at residues 4 to 108, 116 to 203, and 224 to 308; these read RDTL…CKEK, DSTQ…IKQK, and SDFV…VVYL. 6 consecutive transmembrane segments (helical) span residues 7–27, 41–57, 111–131, 180–200, 226–246, and 291–311; these read LVHL…TCPL, LYIS…ASVN, GVFD…AGFT, MSAS…YESI, FVRM…IAYP, and QIPN…LLNG.

It belongs to the mitochondrial carrier (TC 2.A.29) family.

It is found in the mitochondrion inner membrane. The catalysed reaction is UTP(in) + CTP(out) = UTP(out) + CTP(in). It carries out the reaction CTP(out) + UDP(in) = CTP(in) + UDP(out). It catalyses the reaction UMP(in) + CTP(out) = UMP(out) + CTP(in). The enzyme catalyses dUTP(in) + CTP(out) = dUTP(out) + CTP(in). The catalysed reaction is dUMP(in) + CTP(out) = dUMP(out) + CTP(in). It carries out the reaction CDP(in) + CTP(out) = CDP(out) + CTP(in). It catalyses the reaction CTP(out) + CMP(in) = CTP(in) + CMP(out). The enzyme catalyses dCTP(in) + CTP(out) = dCTP(out) + CTP(in). The catalysed reaction is dCDP(in) + CTP(out) = dCDP(out) + CTP(in). It carries out the reaction dCMP(in) + CTP(out) = dCMP(out) + CTP(in). It catalyses the reaction GTP(in) + CTP(out) = GTP(out) + CTP(in). The enzyme catalyses CTP(out) + GDP(in) = CTP(in) + GDP(out). The catalysed reaction is GMP(in) + CTP(out) = GMP(out) + CTP(in). It carries out the reaction dGTP(in) + CTP(out) = dGTP(out) + CTP(in). It catalyses the reaction dGMP(in) + CTP(out) = dGMP(out) + CTP(in). The enzyme catalyses ITP(in) + CTP(out) = ITP(out) + CTP(in). The catalysed reaction is IDP(in) + CTP(out) = IDP(out) + CTP(in). It carries out the reaction IMP(in) + CTP(out) = IMP(out) + CTP(in). It catalyses the reaction CTP(out) = CTP(in). Mitochondrial transporter that imports/exports pyrimidine nucleotides into and from mitochondria. Selectively transports cytosine, guanosine, inosine and uridine (deoxy)nucleoside mono-, di-, and triphosphates by antiport mechanism. Catalyzes uniport at much lower rate. May import (deoxy)nucleoside triphosphates in exchange for intramitochondrial (deoxy)nucleoside mono- and diphosphates, thus providing precursors necessary for de novo synthesis of mitochondrial DNA and RNA while exporting products of their catabolism. Participates in mitochondrial genome maintenance, regulation of mitochondrial membrane potential and mitochondrial respiration. In Mus musculus (Mouse), this protein is Solute carrier family 25 member 36 (Slc25a36).